The following is a 364-amino-acid chain: DNA replication and repair protein RecF (364 aa).

30-37 (GDNGAGKT) serves as a coordination point for ATP.

It belongs to the RecF family.

Its subcellular location is the cytoplasm. In terms of biological role, the RecF protein is involved in DNA metabolism; it is required for DNA replication and normal SOS inducibility. RecF binds preferentially to single-stranded, linear DNA. It also seems to bind ATP. The sequence is that of DNA replication and repair protein RecF from Stenotrophomonas maltophilia (strain R551-3).